A 209-amino-acid polypeptide reads, in one-letter code: MMNPWIDISQRLDEHIPVWPGDTPFSYRTRWNKAESGSVNVGQITMSTHTGTHIDAPFHFDNEGKRVIDLDLNIYIGPARVIHLSNPKKIGIDELQTIDLHGVTRLLIYTGAWTNRTTFPETIPYIDPPLAPYLKKYGVRLIGIDLPSVDPLTSKQLPAHHELHRCGIHILEGLVLDHVSPGDYELAALPLPLVNADGSPVRAALRKMG.

Tryptophan 19 lines the substrate pocket. Zn(2+) is bound by residues histidine 49, histidine 53, and aspartate 55. Catalysis depends on histidine 59, which acts as the Proton donor/acceptor. Positions 160 and 172 each coordinate Zn(2+).

This sequence belongs to the Cyclase 1 superfamily. KynB family. As to quaternary structure, homodimer. Zn(2+) is required as a cofactor.

The enzyme catalyses N-formyl-L-kynurenine + H2O = L-kynurenine + formate + H(+). It participates in amino-acid degradation; L-tryptophan degradation via kynurenine pathway; L-kynurenine from L-tryptophan: step 2/2. Functionally, catalyzes the hydrolysis of N-formyl-L-kynurenine to L-kynurenine, the second step in the kynurenine pathway of tryptophan degradation. This is Kynurenine formamidase from Geobacillus thermodenitrificans (strain NG80-2).